A 435-amino-acid polypeptide reads, in one-letter code: tRNA modification GTPase MnmE (435 aa).

Residues arginine 24, glutamate 85, and arginine 124 each contribute to the (6S)-5-formyl-5,6,7,8-tetrahydrofolate site. The region spanning 220–361 is the TrmE-type G domain; the sequence is GLVFTIVGAP…LRTALAERAR (142 aa). Asparagine 230 is a K(+) binding site. GTP is bound by residues 230-235, 249-255, and 274-277; these read NVGKSS, SAIAGTT, and DTAG. Residue serine 234 coordinates Mg(2+). Serine 249, isoleucine 251, and threonine 254 together coordinate K(+). Threonine 255 contributes to the Mg(2+) binding site. (6S)-5-formyl-5,6,7,8-tetrahydrofolate is bound at residue lysine 435.

It belongs to the TRAFAC class TrmE-Era-EngA-EngB-Septin-like GTPase superfamily. TrmE GTPase family. As to quaternary structure, homodimer. Heterotetramer of two MnmE and two MnmG subunits. K(+) serves as cofactor.

The protein resides in the cytoplasm. In terms of biological role, exhibits a very high intrinsic GTPase hydrolysis rate. Involved in the addition of a carboxymethylaminomethyl (cmnm) group at the wobble position (U34) of certain tRNAs, forming tRNA-cmnm(5)s(2)U34. In Gluconacetobacter diazotrophicus (strain ATCC 49037 / DSM 5601 / CCUG 37298 / CIP 103539 / LMG 7603 / PAl5), this protein is tRNA modification GTPase MnmE.